Consider the following 224-residue polypeptide: Uracil-DNA glycosylase (224 aa).

Asp61 (proton acceptor) is an active-site residue.

It belongs to the uracil-DNA glycosylase (UDG) superfamily. UNG family.

It is found in the cytoplasm. It carries out the reaction Hydrolyzes single-stranded DNA or mismatched double-stranded DNA and polynucleotides, releasing free uracil.. Functionally, excises uracil residues from the DNA which can arise as a result of misincorporation of dUMP residues by DNA polymerase or due to deamination of cytosine. This chain is Uracil-DNA glycosylase, found in Mannheimia succiniciproducens (strain KCTC 0769BP / MBEL55E).